A 3748-amino-acid chain; its full sequence is Intermembrane lipid transfer protein VPS13C (3748 aa).

In terms of domain architecture, Chorein N-terminal spans 3–115 (LESVVADLLN…SLQDIKQKEL (113 aa)). Ser132 is modified (phosphoserine). A Phosphothreonine modification is found at Thr613. A Phosphoserine modification is found at Ser618. Phosphothreonine is present on Thr623. Phosphoserine is present on residues Ser736, Ser841, Ser871, and Ser873. Residues 876-882 (EFFDAED) carry the FFAT motif. Thr1968 bears the Phosphothreonine mark. Ser1974 and Ser2442 each carry phosphoserine. Positions 2410-3304 (DYSLKDRAPF…IQQDIDALNT (895 aa)) are required for late endosome/lysosome localization. The region spanning 2760–3012 (ELSVFSPYWL…LFAWADPTGI (253 aa)) is the SHR-BD domain. Positions 3305-3748 (ELMESSMTDM…VKLLRPQGPS (444 aa)) are required for lipid droplet localization. Omega-N-methylarginine occurs at positions 3514 and 3521. An N6-acetyllysine modification is found at Lys3533.

This sequence belongs to the VPS13 family.

Its subcellular location is the mitochondrion outer membrane. It localises to the lipid droplet. The protein localises to the endoplasmic reticulum membrane. It is found in the lysosome membrane. The protein resides in the late endosome membrane. Its function is as follows. Mediates the transfer of lipids between membranes at organelle contact sites. Necessary for proper mitochondrial function and maintenance of mitochondrial transmembrane potential. Involved in the regulation of PINK1/PRKN-mediated mitophagy in response to mitochondrial depolarization. The chain is Intermembrane lipid transfer protein VPS13C from Mus musculus (Mouse).